The chain runs to 380 residues: 2-aminoethylphosphonate--pyruvate transaminase (380 aa).

Lys204 is subject to N6-(pyridoxal phosphate)lysine.

This sequence belongs to the class-V pyridoxal-phosphate-dependent aminotransferase family. PhnW subfamily. As to quaternary structure, homodimer. It depends on pyridoxal 5'-phosphate as a cofactor.

The enzyme catalyses (2-aminoethyl)phosphonate + pyruvate = phosphonoacetaldehyde + L-alanine. Involved in phosphonate degradation. This is 2-aminoethylphosphonate--pyruvate transaminase from Aeromonas hydrophila subsp. hydrophila (strain ATCC 7966 / DSM 30187 / BCRC 13018 / CCUG 14551 / JCM 1027 / KCTC 2358 / NCIMB 9240 / NCTC 8049).